We begin with the raw amino-acid sequence, 303 residues long: DDRGK domain-containing protein 1 (303 aa).

The Lumenal segment spans residues 1 to 2 (MD). A helical transmembrane segment spans residues 3-23 (LILLIGIATALLIILLTLYFL). Over 24–303 (QKRNAPAETK…TPVTASEGGA (280 aa)) the chain is Cytoplasmic. Disordered stretches follow at residues 31-53 (ETKAAAQPQRGVPLRAQEGVPRR) and 84-160 (AIDP…AEVE). Over residues 106 to 160 (LDEKMGAKKRAKMEAKEQKRLQREQELHDREQRKVKEAKEEAERKQQDDLDAEVE) the composition is skewed to basic and acidic residues.

It belongs to the DDRGK1 family. Interacts with Atg9; the interaction is transient.

It localises to the endoplasmic reticulum membrane. Substrate adapter for ufmylation, the covalent attachment of the ubiquitin-like modifier UFM1 to substrate proteins. Required for ufmylation of Atg9; protects the nervous system during aging, possibly by stabilizing Atg9 and supporting its function. This Drosophila grimshawi (Hawaiian fruit fly) protein is DDRGK domain-containing protein 1.